We begin with the raw amino-acid sequence, 85 residues long: Senescence-associated and QQS-related protein (85 aa).

Residues 1 to 24 (MSFRKVEKKPTEMGRNMTHEKSDS) show a composition bias toward basic and acidic residues. Disordered stretches follow at residues 1 to 35 (MSFR…PMTV) and 55 to 85 (SGKA…FPNY). Polar residues predominate over residues 58-77 (ARSNYNLTGTAKGTGPINSF).

As to expression, expressed predominantly within leaves and cotyledons vasculatures. Mainly observed in fully expanded leaves, at the base of mature inflorescences, in senescing leaves and cauline leaves, and, to a lower extent, in hypocotyls and rosette leaves prior to flowering.

Plays a role in carbon allocation, including during senescence and stresses, thus impacting starch accumulation. The protein is Senescence-associated and QQS-related protein of Arabidopsis thaliana (Mouse-ear cress).